Reading from the N-terminus, the 147-residue chain is Cytochrome c-type biogenesis protein CcmE (147 aa).

At 1–7 (MKPRHKR) the chain is on the cytoplasmic side. Residues 8-28 (AAIIAGGLAALGIAAYLVLNA) form a helical; Signal-anchor for type II membrane protein membrane-spanning segment. The Periplasmic segment spans residues 29–147 (FQSNLVFFFS…QIQKTIKSLK (119 aa)). His-121 and Tyr-125 together coordinate heme.

This sequence belongs to the CcmE/CycJ family.

The protein resides in the cell inner membrane. Its function is as follows. Heme chaperone required for the biogenesis of c-type cytochromes. Transiently binds heme delivered by CcmC and transfers the heme to apo-cytochromes in a process facilitated by CcmF and CcmH. This Albidiferax ferrireducens (strain ATCC BAA-621 / DSM 15236 / T118) (Rhodoferax ferrireducens) protein is Cytochrome c-type biogenesis protein CcmE.